A 359-amino-acid polypeptide reads, in one-letter code: Fructose-1,6-bisphosphatase class 1 (359 aa).

Mg(2+)-binding residues include Glu95, Asp117, Leu119, and Asp120. Residues 120-123 (DGSS) and Asn212 contribute to the substrate site. Mg(2+) is bound at residue Glu284.

Belongs to the FBPase class 1 family. As to quaternary structure, homotetramer. Requires Mg(2+) as cofactor.

Its subcellular location is the cytoplasm. The catalysed reaction is beta-D-fructose 1,6-bisphosphate + H2O = beta-D-fructose 6-phosphate + phosphate. It functions in the pathway carbohydrate biosynthesis; gluconeogenesis. This is Fructose-1,6-bisphosphatase class 1 from Hydrogenophilus thermoluteolus (Pseudomonas hydrogenothermophila).